A 137-amino-acid polypeptide reads, in one-letter code: Probable 4-amino-4-deoxy-L-arabinose-phosphoundecaprenol flippase subunit ArnF (137 aa).

Residues 1 to 3 (MNA) are Cytoplasmic-facing. Residues 4–24 (LRGWLAALGSMLLASAAQLGM) traverse the membrane as a helical segment. Residues 25–44 (RWGMSRLPLPEAWAGQTPER) are Periplasmic-facing. A helical transmembrane segment spans residues 45–65 (AALLAVALAVAAYAASLLCWL). Topologically, residues 66–76 (AALRHLPLGRA) are cytoplasmic. A helical membrane pass occupies residues 77–97 (YSLLSASYALVYLLAASLPAF). Topologically, residues 98–100 (DET) are periplasmic. Residues 101–121 (FSTSKILGVGLVVLGVLTVNA) form a helical membrane-spanning segment. At 122–137 (RRTAAAPAHHPSRKAP) the chain is on the cytoplasmic side.

The protein belongs to the ArnF family. Heterodimer of ArnE and ArnF.

The protein resides in the cell inner membrane. It participates in bacterial outer membrane biogenesis; lipopolysaccharide biosynthesis. Its function is as follows. Translocates 4-amino-4-deoxy-L-arabinose-phosphoundecaprenol (alpha-L-Ara4N-phosphoundecaprenol) from the cytoplasmic to the periplasmic side of the inner membrane. The chain is Probable 4-amino-4-deoxy-L-arabinose-phosphoundecaprenol flippase subunit ArnF from Pseudomonas aeruginosa (strain LESB58).